The chain runs to 290 residues: MIIVTDSERKIRLPFSRGILTRSITLAGIDVGIAYAIATEVQKELEWKGKKSVTTEEIRELTYQKLLEKGLREEAKRYLFWRELRRRKVRLTVLLGGATGVGKSTIATELAFRLGIRSIIGTDTIREVMRKIIAKELLPDIHVSSFLAERVVKAPKNSDPLIYGFETQVKHVSVGIKAVLERARREGLNTLIEGIHVVPGFVEPREDEFMYVIAVPKKDYLIAHFYERARYSQRDAEKYVKHVDRIMRIQDYLVERAREHGIPVIENVELESTVSTILADMMKKLEEMGV.

One can recognise an ATP-cone domain in the interval 1–89; the sequence is MIIVTDSERK…FWRELRRRKV (89 aa).

The protein belongs to the 2-phosphoglycerate kinase family. The cofactor is a divalent metal cation.

The enzyme catalyses (2R)-2-phosphoglycerate + ATP = (2R)-2,3-bisphosphoglycerate + ADP + H(+). The protein operates within thermoadapter biosynthesis; cyclic 2,3-diphosphoglycerate biosynthesis; cyclic 2,3-diphosphoglycerate from 2-phospho-D-glycerate: step 1/2. In terms of biological role, catalyzes the phosphorylation of 2-phosphoglycerate to 2,3-diphosphoglycerate. Involved in the biosynthesis of cyclic 2,3-bisphosphoglycerate, a thermoprotectant. The sequence is that of 2-phosphoglycerate kinase from Thermococcus kodakarensis (strain ATCC BAA-918 / JCM 12380 / KOD1) (Pyrococcus kodakaraensis (strain KOD1)).